The chain runs to 353 residues: Sphingosine 1-phosphate receptor 2 (353 aa).

Over 1–34 (MGSLYSEYLNPNKVQEHYNYTKETLETQETTSRQ) the chain is Extracellular. Asn-19 is a glycosylation site (N-linked (GlcNAc...) asparagine). The helical transmembrane segment at 35–59 (VASAFIVILCCAIVVENLLVLIAVA) threads the bilayer. The Cytoplasmic segment spans residues 60–66 (RNSKFHS). A helical transmembrane segment spans residues 67–95 (AMYLFLGNLAASDLLAGVAFVANTLLSGS). Residues 96 to 109 (VTLRLTPVQWFARE) lie on the Extracellular side of the membrane. Residues 110 to 128 (GSAFITLSASVFSLLAIAI) traverse the membrane as a helical segment. The Cytoplasmic segment spans residues 129 to 147 (ERHVAIAKVKLYGSDKSCR). Residues 148 to 173 (MLLLIGASWLISLVLGGLPILGWNCL) traverse the membrane as a helical segment. Residues 174–189 (GHLEACSTVLPLYAKH) lie on the Extracellular side of the membrane. Residues 190–210 (YVLCVVTIFSIILLAIVALYV) form a helical membrane-spanning segment. The Cytoplasmic portion of the chain corresponds to 211 to 233 (RIYCVVRSSHADMAAPQTLALLK). The chain crosses the membrane as a helical span at residues 234-255 (TVTIVLGVFIVCWLPAFSILLL). At 256-271 (DYACPVHSCPILYKAH) the chain is on the extracellular side. The helical transmembrane segment at 272–292 (YFFAVSTLNSLLNPVIYTWRS) threads the bilayer. The Cytoplasmic portion of the chain corresponds to 293–353 (RDLRREVLRP…PTFLEGNTVV (61 aa)). Residue Cys-305 is the site of S-palmitoyl cysteine attachment.

Belongs to the G-protein coupled receptor 1 family.

It localises to the cell membrane. In terms of biological role, receptor for the lysosphingolipid sphingosine 1-phosphate (S1P). S1P is a bioactive lysophospholipid that elicits diverse physiological effects on most types of cells and tissues. When expressed in rat HTC4 hepatoma cells, is capable of mediating S1P-induced cell proliferation and suppression of apoptosis. Receptor for the chemokine-like protein FAM19A5. Mediates the inhibitory effect of FAM19A5 on vascular smooth muscle cell proliferation and migration. In lymphoid follicles, couples the binding of S1P to the activation of GNA13 and downstream inhibition of AKT activation leading to suppression of germinal center (GC) B cell growth and migration outside the GC niche. The chain is Sphingosine 1-phosphate receptor 2 (S1PR2) from Homo sapiens (Human).